The following is an 826-amino-acid chain: Ubiquitin carboxyl-terminal hydrolase 16 (826 aa).

A UBP-type zinc finger spans residues 22–142; sequence PMCRHIRKGL…QVVDYVRKQA (121 aa). Zn(2+) is bound by residues Cys24, His26, Cys48, Cys51, Cys74, Cys77, Cys82, His90, His94, His103, Cys116, and Cys119. A Glycyl lysine isopeptide (Lys-Gly) (interchain with G-Cter in SUMO2) cross-link involves residue Lys140. The tract at residues 146–190 is disordered; sequence TPKPAEKDNGNIELENKKLEKESKNEQEREKKENMAKENPPMNSP. Residues 149 to 181 are compositionally biased toward basic and acidic residues; the sequence is PAEKDNGNIELENKKLEKESKNEQEREKKENMA. The residue at position 189 (Ser189) is a Phosphoserine. Residues 196 to 825 form the USP domain; it reads KGLSNLGNTC…QAYLLFYERI (630 aa). Cys205 functions as the Nucleophile in the catalytic mechanism. Residues 394 to 408 show a composition bias toward basic and acidic residues; the sequence is SGKKSVNDKNLKKTM. The segment at 394–460 is disordered; that stretch reads SGKKSVNDKN…AKNQRRQQKI (67 aa). Residues 409 to 420 show a composition bias toward acidic residues; the sequence is EDEDQDSEEEKD. At Ser415 the chain carries Phosphoserine. Basic and acidic residues predominate over residues 421–430; that stretch reads NDSYIKERSD. Basic residues predominate over residues 438-458; it reads HLQKKAKKQAKKQAKNQRRQQ. Position 552 is a phosphoserine (Ser552). Phosphothreonine is present on Thr557. His761 serves as the catalytic Proton acceptor.

The protein belongs to the peptidase C19 family. USP16 subfamily. In terms of assembly, homotetramer. Associates with late pre-40S ribosomes. Interacts with CEP78; promoting deubiquitination of tektins. In terms of processing, phosphorylated at the onset of mitosis and dephosphorylated during the metaphase/anaphase transition. Phosphorylation by AURKB enhances the deubiquitinase activity.

The protein localises to the nucleus. The catalysed reaction is Thiol-dependent hydrolysis of ester, thioester, amide, peptide and isopeptide bonds formed by the C-terminal Gly of ubiquitin (a 76-residue protein attached to proteins as an intracellular targeting signal).. Functionally, specifically deubiquitinates 'Lys-120' of histone H2A (H2AK119Ub), a specific tag for epigenetic transcriptional repression, thereby acting as a coactivator. Deubiquitination of histone H2A is a prerequisite for subsequent phosphorylation at 'Ser-11' of histone H3 (H3S10ph), and is required for chromosome segregation when cells enter into mitosis. In resting B- and T-lymphocytes, phosphorylation by AURKB leads to enhance its activity, thereby maintaining transcription in resting lymphocytes. Regulates Hox gene expression via histone H2A deubiquitination. Prefers nucleosomal substrates. Does not deubiquitinate histone H2B. Also deubiquitinates non-histone proteins, such as ribosomal protein RPS27A: deubiquitination of monoubiquitinated RPS27A promotes maturation of the 40S ribosomal subunit. Also mediates deubiquitination of tektin proteins (TEKT1, TEKT2, TEK3, TEKT4 and TEKT5), promoting their stability. The chain is Ubiquitin carboxyl-terminal hydrolase 16 from Macaca fascicularis (Crab-eating macaque).